Consider the following 358-residue polypeptide: Mannonate dehydratase (358 aa).

This sequence belongs to the mannonate dehydratase family. The cofactor is Fe(2+). Requires Mn(2+) as cofactor.

It catalyses the reaction D-mannonate = 2-dehydro-3-deoxy-D-gluconate + H2O. It participates in carbohydrate metabolism; pentose and glucuronate interconversion. Its function is as follows. Catalyzes the dehydration of D-mannonate. The chain is Mannonate dehydratase from Shouchella clausii (strain KSM-K16) (Alkalihalobacillus clausii).